A 355-amino-acid polypeptide reads, in one-letter code: Uroporphyrinogen decarboxylase (355 aa).

Residues 36-40 (RQAGR), D85, Y160, S215, and H334 each bind substrate.

Belongs to the uroporphyrinogen decarboxylase family. As to quaternary structure, homodimer.

Its subcellular location is the cytoplasm. The catalysed reaction is uroporphyrinogen III + 4 H(+) = coproporphyrinogen III + 4 CO2. Its pathway is porphyrin-containing compound metabolism; protoporphyrin-IX biosynthesis; coproporphyrinogen-III from 5-aminolevulinate: step 4/4. Functionally, catalyzes the decarboxylation of four acetate groups of uroporphyrinogen-III to yield coproporphyrinogen-III. This Rhodococcus opacus (strain B4) protein is Uroporphyrinogen decarboxylase.